The primary structure comprises 121 residues: Group 1 truncated hemoglobin (121 aa).

Position 1 is an N-acetylmethionine (M1). H73 contributes to the heme binding site.

The protein belongs to the truncated hemoglobin family. Group I subfamily. Monomer. It depends on heme as a cofactor.

The sequence is that of Group 1 truncated hemoglobin from Tetrahymena pyriformis.